The sequence spans 339 residues: 4-dimethylallyltryptophan N-methyltransferase easF (339 aa).

This sequence belongs to the methyltransferase superfamily. In terms of assembly, homodimer.

It catalyses the reaction 4-(3-methylbut-2-enyl)-L-tryptophan + S-adenosyl-L-methionine = 4-(3-methylbut-2-enyl)-L-abrine + S-adenosyl-L-homocysteine + H(+). It participates in alkaloid biosynthesis; ergot alkaloid biosynthesis. Its function is as follows. 4-dimethylallyltryptophan N-methyltransferase; part of the gene cluster that mediates the biosynthesis of fumiclavanine C, a fungal ergot alkaloid. DmaW catalyzes the first step of ergot alkaloid biosynthesis by condensing dimethylallyl diphosphate (DMAP) and tryptophan to form 4-dimethylallyl-L-tryptophan. The second step is catalyzed by the methyltransferase easF that methylates 4-dimethylallyl-L-tryptophan in the presence of S-adenosyl-L-methionine, resulting in the formation of 4-dimethylallyl-L-abrine. The catalase easC and the FAD-dependent oxidoreductase easE then transform 4-dimethylallyl-L-abrine to chanoclavine-I which is further oxidized by EasD in the presence of NAD(+), resulting in the formation of chanoclavine-I aldehyde. EasA reduces chanoclavine-I aldehyde to dihydrochanoclavine-I aldehyde that spontaneously dehydrates to form 6,8-dimethyl-6,7-didehydroergoline. EasG then catalyzes the reduction of 6,8-dimethyl-6,7-didehydroergoline to form festuclavine. Hydrolysis of festuclavine by easM then leads to the formation of fumigaclavine B which is in turn acetylated by easN to fumigaclavine A. Finally, easL catalyzes the conversion of fumigaclavine A into fumigaclavine C by attaching a dimethylallyl moiety to C-2 of the indole nucleus. The sequence is that of 4-dimethylallyltryptophan N-methyltransferase easF from Aspergillus fumigatus (strain ATCC MYA-4609 / CBS 101355 / FGSC A1100 / Af293) (Neosartorya fumigata).